The following is a 298-amino-acid chain: HTH-type transcriptional regulator ArgP (298 aa).

In terms of domain architecture, HTH lysR-type spans 4–60; the sequence is LDYKWIEALDAVVAQGGFERAAEELYISQSAVSQRIKQLERFLAQSVLIREQPPKPT. Residues 21–40 constitute a DNA-binding region (H-T-H motif); the sequence is FERAAEELYISQSAVSQRIK.

The protein belongs to the LysR transcriptional regulatory family. As to quaternary structure, homodimer.

Functionally, controls the transcription of genes involved in arginine and lysine metabolism. The sequence is that of HTH-type transcriptional regulator ArgP from Vibrio vulnificus (strain YJ016).